We begin with the raw amino-acid sequence, 302 residues long: Probable alpha-L-glutamate ligase (302 aa).

Residues 112–294 (LQLLLKTGVP…IAAEIIDYIE (183 aa)) enclose the ATP-grasp domain. ATP-binding positions include lysine 148, 185 to 186 (DF), aspartate 194, and 218 to 220 (RAN). Mg(2+) is bound by residues aspartate 255, glutamate 267, and asparagine 269. Mn(2+) is bound by residues aspartate 255, glutamate 267, and asparagine 269.

It belongs to the RimK family. The cofactor is Mg(2+). Requires Mn(2+) as cofactor.

The protein is Probable alpha-L-glutamate ligase of Haemophilus influenzae (strain 86-028NP).